The following is a 179-amino-acid chain: Shikimate kinase (179 aa).

Position 15–20 (15–20 (GAGKTS)) interacts with ATP. Residue Thr-19 participates in Mg(2+) binding. Positions 37, 61, and 83 each coordinate substrate. Arg-122 contacts ATP. Arg-142 serves as a coordination point for substrate.

This sequence belongs to the shikimate kinase family. As to quaternary structure, monomer. It depends on Mg(2+) as a cofactor.

It is found in the cytoplasm. It carries out the reaction shikimate + ATP = 3-phosphoshikimate + ADP + H(+). It participates in metabolic intermediate biosynthesis; chorismate biosynthesis; chorismate from D-erythrose 4-phosphate and phosphoenolpyruvate: step 5/7. Its function is as follows. Catalyzes the specific phosphorylation of the 3-hydroxyl group of shikimic acid using ATP as a cosubstrate. This Coxiella burnetii (strain RSA 331 / Henzerling II) protein is Shikimate kinase.